The primary structure comprises 873 residues: DNA mismatch repair protein PMS1 (873 aa).

The segment at 1 to 357 is DNA- and ATP-binding; it reads MTQIHQINDI…FKTTLSDYYN (357 aa). The span at 379–402 shows a compositional bias: basic and acidic residues; sequence LKTEVFDDRSTTHESDNENYHTAR. The disordered stretch occupies residues 379–423; the sequence is LKTEVFDDRSTTHESDNENYHTARSESNQSNHAHFNSTTGVIDKS. A Phosphoserine modification is found at Ser-393. A compositionally biased stretch (polar residues) spans 403–423; it reads SESNQSNHAHFNSTTGVIDKS. The residue at position 566 (Ser-566) is a Phosphoserine. Positions 661-873 are interaction with MLH1; the sequence is YLTLTVSKND…WSSFSKDYEI (213 aa).

The protein belongs to the DNA mismatch repair MutL/HexB family. Heterodimer of MLH1 and PMS1, called MutLalpha, which is the major MMR MutL activity correcting base-base mismatches as well as IDLs. The heterodimer binds double strand DNA independently of a mismatch with positive cooperativity and has more than one DNA binding site. Forms a ternary complex with either the MSH2-MSH6 (MutSalpha) or the MSH2-MSH3 heterodimer (MutSbeta), which recognize and bind to mismatch DNA. Ternary complex formation is promoted by ATP binding.

The protein localises to the nucleus. Required for DNA mismatch repair (MMR), correcting base-base mismatches and insertion-deletion loops (IDLs) resulting from DNA replication, DNA damage or from recombination events between non-identical sequences during meiosis. Component of the MutLalpha heterodimer that forms a ternary complex with the MutS heterodimers, which initially recognize the DNA mismatches. This complex is thought to be responsible for directing the downstream MMR events, including strand discrimination, excision, and resynthesis. Plays a major role in maintaining the genetic stability of simple sequence repeats and in the repair of heteroduplex sites present in meiotic recombination intermediates. This chain is DNA mismatch repair protein PMS1 (PMS1), found in Saccharomyces cerevisiae (strain ATCC 204508 / S288c) (Baker's yeast).